A 132-amino-acid chain; its full sequence is MLPRDRRVRTPAEFRHLGRTGTRAGRRTVVVSVATDPDQTRSTSPSAPRPRAGFVVSKAVGNAVTRNRVKRRLRAVVAEQMRLPPLRDLPVLVQVRALPAAAEADYALLRRETVGALGKALKPHLPAASEHA.

The protein belongs to the RnpA family. In terms of assembly, consists of a catalytic RNA component (M1 or rnpB) and a protein subunit.

It carries out the reaction Endonucleolytic cleavage of RNA, removing 5'-extranucleotides from tRNA precursor.. In terms of biological role, RNaseP catalyzes the removal of the 5'-leader sequence from pre-tRNA to produce the mature 5'-terminus. It can also cleave other RNA substrates such as 4.5S RNA. The protein component plays an auxiliary but essential role in vivo by binding to the 5'-leader sequence and broadening the substrate specificity of the ribozyme. The protein is Ribonuclease P protein component of Micrococcus luteus (strain ATCC 4698 / DSM 20030 / JCM 1464 / CCM 169 / CCUG 5858 / IAM 1056 / NBRC 3333 / NCIMB 9278 / NCTC 2665 / VKM Ac-2230) (Micrococcus lysodeikticus).